The chain runs to 424 residues: Tol-Pal system protein TolB (424 aa).

The N-terminal stretch at 1-16 (MKQLLVLILSLYTTLA) is a signal peptide.

It belongs to the TolB family. The Tol-Pal system is composed of five core proteins: the inner membrane proteins TolA, TolQ and TolR, the periplasmic protein TolB and the outer membrane protein Pal. They form a network linking the inner and outer membranes and the peptidoglycan layer.

Its subcellular location is the periplasm. Its function is as follows. Part of the Tol-Pal system, which plays a role in outer membrane invagination during cell division and is important for maintaining outer membrane integrity. The protein is Tol-Pal system protein TolB of Ruthia magnifica subsp. Calyptogena magnifica.